An 893-amino-acid chain; its full sequence is MPLLLATTLANNSHHQHLSTTATETAAAAATAKAAATAAAAATATMLLTSPTAATHCLAAATSAAGVNVQITGQGVSATLNDDQLQLPANYAANVGHLNGFNPKDNCPPVPPTSERAFEGLLRLPQIQVKQEFMESPPERPSCHPMNHQQAPANSALATSCRGKTILNPWYLRPADGIGYHNYNSNNNNSGSGEINKDVSQQMTSACGGSDGQTCLPVSYFGMETLASVKQRQKSLPDFLIPLHEIMFQQQHHYQQRTMGTLINSLPPGLVGYPPQKTETFKSLTPPKALQHHQNNQNHQIPQNHTGDHSFVRHFHERDRLIREHQLKHQQLRDVEEVLQEQEQDEEQEHETLRKPHVVPSELEHNHHWHGVVCDANGHATRLLHIAPPRAGPTPLPTHQQPPVGEVLPPNSTSFSTIVDPPKEPSIYEQPAPNGRHCRPANKVMRHMSNSPTPPSPLRSLSDCGKSFEEEELELGENCEMPQNLSSKRQARELDSELENEVLDLAPPPKRLAEEQEEEKVASVNPPQPVAFAPEEMHQALQLQLHSYIEMVRQLAPEAFPNPNLATQFLLQNSLQALAQFQALQQMKQQQREDPLPSYSTPLAKSPLRSPSLSPVPRHSKSQQRTPPNSMTANSLGMSSAVMTPNTPSMQQQPQLQQSTPKPTSGLTVASAMAKLEQSPEETTDLEELEQFAKTFKQRRIKLGFTQGDVGLAMGKLYGNDFSQTTISRFEALNLSFKNMCKLKPLLQKWLEDADSTVAKSGGGVFNINTMTSTLSSTPESILGRRRKKRTSIETTVRTTLEKAFLMNCKPTSEEISQLSERLNMDKEVIRVWFCNRRQKEKRINPSLDLDSPTGTPLSSHAFGYPPQALNMSHMQMEGGSGSFCGSSISSGE.

Positions 586-668 are disordered; that stretch reads QMKQQQREDP…STPKPTSGLT (83 aa). Residues 602–617 are compositionally biased toward low complexity; the sequence is PLAKSPLRSPSLSPVP. Over residues 623–646 the composition is skewed to polar residues; it reads QQRTPPNSMTANSLGMSSAVMTPN. Over residues 647–665 the composition is skewed to low complexity; it reads TPSMQQQPQLQQSTPKPTS. A POU-specific domain is found at 681–755; that stretch reads EETTDLEELE…LLQKWLEDAD (75 aa). The homeobox DNA-binding region spans 786–845; sequence RRKKRTSIETTVRTTLEKAFLMNCKPTSEEISQLSERLNMDKEVIRVWFCNRRQKEKRIN.

Belongs to the POU transcription factor family. Class-2 subfamily. In terms of tissue distribution, initial expression in cellular blastoderm stage, then in ectodermal stripes during germband extension. Broad expression in the neuroectoderm followed by limitation to discrete subsets of CNS cells, and expression in specific PNS neurons and support cells.

The protein localises to the nucleus. Its function is as follows. DNA-binding regulatory protein implicated in early development. Involved in neuronal cell fate decision. May act as an octamer-dependent activator of transcription. Could also play an early role in specific ectodermal cells, and a subsequent role in the embryonic nervous system. This is POU domain protein 2, isoform B from Drosophila melanogaster (Fruit fly).